The chain runs to 362 residues: Molybdenum import ATP-binding protein ModC (362 aa).

The region spanning 4–238 is the ABC transporter domain; it reads AGEAAIRARF…LDLPIRLGED (235 aa). Position 38 to 45 (38 to 45) interacts with ATP; it reads GHSGSGKT. Residues 297 to 362 enclose the Mop domain; that stretch reads GTSILNTLPA…AQIKAVALVG (66 aa).

This sequence belongs to the ABC transporter superfamily. Molybdate importer (TC 3.A.1.8) family. The complex is composed of two ATP-binding proteins (ModC), two transmembrane proteins (ModB) and a solute-binding protein (ModA).

It localises to the cell inner membrane. It catalyses the reaction molybdate(out) + ATP + H2O = molybdate(in) + ADP + phosphate + H(+). Part of the ABC transporter complex ModABC involved in molybdenum import. Responsible for energy coupling to the transport system. The protein is Molybdenum import ATP-binding protein ModC of Thiobacillus denitrificans (strain ATCC 25259 / T1).